A 1312-amino-acid chain; its full sequence is Rho GTPase-activating protein gacG (1312 aa).

Disordered regions lie at residues 52 to 74 (VENN…KRSQ), 111 to 158 (SNNN…SSSD), 314 to 519 (ISSS…PRNF), 762 to 831 (NSIS…SSTG), 1185 to 1230 (NNNN…SSSV), and 1282 to 1312 (TGTS…IVEE). Composition is skewed to low complexity over residues 53–67 (ENNN…NSEN) and 111–146 (SNNN…YSPR). Positions 147 to 158 (NNNNNFTESSSD) are enriched in polar residues. 3 stretches are compositionally biased toward low complexity: residues 328-355 (TTAA…ANNS), 373-397 (HHSS…IGNS), and 414-436 (LNLT…NNGN). The span at 437–449 (EVIQSSSSTSSPR) shows a compositional bias: polar residues. Low complexity predominate over residues 479 to 507 (SSTNSLNNSTSSLKSSNNNILQQQQQQQQ). 2 stretches are compositionally biased toward polar residues: residues 508–518 (HYDSAPTTPRN) and 763–776 (SIST…GNIA). Over residues 792 to 816 (NNNNNNNNNNNNNNNNNNNNNNNNN) the composition is skewed to low complexity. The Rho-GAP domain maps to 1030 to 1212 (SKIDPITGFN…HHNSHHHRDN (183 aa)). The segment covering 1196-1210 (HHHHHHHHHNSHHHR) has biased composition (basic residues). Low complexity-rich tracts occupy residues 1213-1222 (NNNNSNNNSS) and 1282-1305 (TGTS…RSPS).

The protein localises to the cytoplasm. In terms of biological role, rho GTPase-activating protein involved in the signal transduction pathway. In Dictyostelium discoideum (Social amoeba), this protein is Rho GTPase-activating protein gacG (gacG).